A 565-amino-acid chain; its full sequence is Protein NRT1/ PTR FAMILY 5.15 (565 aa).

2 helical membrane passes run 49–67 (FAYF…GPLG) and 80–100 (WSGT…AYLG). At Thr104 the chain carries Phosphothreonine. A run of 10 helical transmembrane segments spans residues 110-130 (LIYI…IMGL), 142-162 (SIWV…GQGG), 189-209 (FFNW…IVVA), 217-237 (WAFG…IFLL), 331-351 (IPIW…ITFF), 368-388 (IPAA…VPLY), 409-429 (LQRI…AALV), 454-474 (IWWF…SMVG), 490-510 (IGLS…GFLI), and 534-554 (YFYW…LFIS).

It belongs to the major facilitator superfamily. Proton-dependent oligopeptide transporter (POT/PTR) (TC 2.A.17) family. In terms of tissue distribution, expressed in shoots, roots and leaves.

It is found in the membrane. This chain is Protein NRT1/ PTR FAMILY 5.15 (NPF5.15), found in Arabidopsis thaliana (Mouse-ear cress).